The chain runs to 49 residues: Large ribosomal subunit protein bL33B (49 aa).

This sequence belongs to the bacterial ribosomal protein bL33 family.

The chain is Large ribosomal subunit protein bL33B (rpmG2) from Listeria innocua serovar 6a (strain ATCC BAA-680 / CLIP 11262).